Reading from the N-terminus, the 275-residue chain is Large ribosomal subunit protein uL2 (275 aa).

2 disordered regions span residues 1 to 24 (MGIR…FSEI) and 208 to 275 (AGRT…RRRR). Residues 12-22 (GTRQATVSDFS) are compositionally biased toward polar residues. Basic residues-rich tracts occupy residues 208–219 (AGRTRHLGRRPQ) and 255–275 (LGKK…RRRR).

Belongs to the universal ribosomal protein uL2 family. In terms of assembly, part of the 50S ribosomal subunit. Forms a bridge to the 30S subunit in the 70S ribosome.

Functionally, one of the primary rRNA binding proteins. Required for association of the 30S and 50S subunits to form the 70S ribosome, for tRNA binding and peptide bond formation. It has been suggested to have peptidyltransferase activity; this is somewhat controversial. Makes several contacts with the 16S rRNA in the 70S ribosome. In Picosynechococcus sp. (strain ATCC 27264 / PCC 7002 / PR-6) (Agmenellum quadruplicatum), this protein is Large ribosomal subunit protein uL2.